The chain runs to 327 residues: Secondary metabolism regulator LAE1 (327 aa).

This sequence belongs to the methyltransferase superfamily. LaeA methyltransferase family.

It localises to the nucleus. The catalysed reaction is L-methionyl-[protein] + S-adenosyl-L-methionine = S-methyl-L-methionyl-[protein] + S-adenosyl-L-homocysteine. Functionally, secondary metabolism regulator that controls the expression of the tenuazonic acid biosynthesis cluster. Methyltransferase that performs automethylation. No other methyl-accepting substrate has been identified yet. In Pyricularia oryzae (strain 70-15 / ATCC MYA-4617 / FGSC 8958) (Rice blast fungus), this protein is Secondary metabolism regulator LAE1.